The chain runs to 261 residues: DNA-directed RNA polymerase subunit Rpo3 (261 aa).

It belongs to the archaeal Rpo3/eukaryotic RPB3 RNA polymerase subunit family. As to quaternary structure, part of the RNA polymerase complex.

The protein localises to the cytoplasm. It carries out the reaction RNA(n) + a ribonucleoside 5'-triphosphate = RNA(n+1) + diphosphate. In terms of biological role, DNA-dependent RNA polymerase (RNAP) catalyzes the transcription of DNA into RNA using the four ribonucleoside triphosphates as substrates. The protein is DNA-directed RNA polymerase subunit Rpo3 of Pyrococcus furiosus (strain ATCC 43587 / DSM 3638 / JCM 8422 / Vc1).